The following is a 458-amino-acid chain: Bifunctional protein GlmU (458 aa).

The tract at residues 1–231 (MSNRALSVVV…QTEVEGVNNR (231 aa)) is pyrophosphorylase. UDP-N-acetyl-alpha-D-glucosamine contacts are provided by residues 11 to 14 (LAAG), K25, Q78, 83 to 84 (GT), 105 to 107 (YGD), G142, E156, N171, and N229. Residue D107 participates in Mg(2+) binding. A Mg(2+)-binding site is contributed by N229. The linker stretch occupies residues 232-252 (LQLARLERLFQREQAERLLLA). Positions 253 to 458 (GVMLSDPDRF…ANWTRPVKKK (206 aa)) are N-acetyltransferase. UDP-N-acetyl-alpha-D-glucosamine contacts are provided by R335 and K353. H365 serves as the catalytic Proton acceptor. The UDP-N-acetyl-alpha-D-glucosamine site is built by Y368 and N379. Residues A382, 388-389 (NY), S407, A425, and R442 contribute to the acetyl-CoA site.

This sequence in the N-terminal section; belongs to the N-acetylglucosamine-1-phosphate uridyltransferase family. The protein in the C-terminal section; belongs to the transferase hexapeptide repeat family. As to quaternary structure, homotrimer. Requires Mg(2+) as cofactor.

Its subcellular location is the cytoplasm. It carries out the reaction alpha-D-glucosamine 1-phosphate + acetyl-CoA = N-acetyl-alpha-D-glucosamine 1-phosphate + CoA + H(+). The catalysed reaction is N-acetyl-alpha-D-glucosamine 1-phosphate + UTP + H(+) = UDP-N-acetyl-alpha-D-glucosamine + diphosphate. It functions in the pathway nucleotide-sugar biosynthesis; UDP-N-acetyl-alpha-D-glucosamine biosynthesis; N-acetyl-alpha-D-glucosamine 1-phosphate from alpha-D-glucosamine 6-phosphate (route II): step 2/2. It participates in nucleotide-sugar biosynthesis; UDP-N-acetyl-alpha-D-glucosamine biosynthesis; UDP-N-acetyl-alpha-D-glucosamine from N-acetyl-alpha-D-glucosamine 1-phosphate: step 1/1. The protein operates within bacterial outer membrane biogenesis; LPS lipid A biosynthesis. In terms of biological role, catalyzes the last two sequential reactions in the de novo biosynthetic pathway for UDP-N-acetylglucosamine (UDP-GlcNAc). The C-terminal domain catalyzes the transfer of acetyl group from acetyl coenzyme A to glucosamine-1-phosphate (GlcN-1-P) to produce N-acetylglucosamine-1-phosphate (GlcNAc-1-P), which is converted into UDP-GlcNAc by the transfer of uridine 5-monophosphate (from uridine 5-triphosphate), a reaction catalyzed by the N-terminal domain. The polypeptide is Bifunctional protein GlmU (Sodalis glossinidius (strain morsitans)).